The primary structure comprises 386 residues: MNISNIKIMLLGSGELGKEFIIAAQRLGIHTIVVDRYKNAPAMQVAHESYVIDMLNSDALEQLILAKNPTYIVPEIEAINTDSLVKLEAHNFNIIPCAKAAKLTMDRQGIRALAAQQLNLQTSKFAFANSEQEYLDVIQSIGLPFVIKPVMSSSGKGQSIVKEHNEIKKAWDYAQNGSRGHAKGVIVEQFIDFDYEITLLTVRHKDGTSFCDPIGHIQKDGDYRFSWQPHTMPDTALAKSQEIAKEITDALGGYGVFGVELFIKGDEVFFNEVSPRPHDTGMVTLISQNINEFELHLRAIVGLPIPDIQTLQPSASAAILLEGDTANASICGIDKALADANVDIRIFGKKEIHGKRRMGVVLAKAQNTHIALETSKQALAHIHLTK.

N(1)-(5-phospho-beta-D-ribosyl)glycinamide is bound by residues glutamate 15–leucine 16 and glutamate 75. ATP-binding positions include arginine 107, lysine 148, serine 153–glutamine 158, glutamate 188–isoleucine 191, and glutamate 196. One can recognise an ATP-grasp domain in the interval alanine 112–valine 301. Mg(2+)-binding residues include glutamate 260 and glutamate 272. Residues aspartate 279, lysine 349, and arginine 356 to arginine 357 contribute to the N(1)-(5-phospho-beta-D-ribosyl)glycinamide site.

It belongs to the PurK/PurT family. As to quaternary structure, homodimer.

It catalyses the reaction N(1)-(5-phospho-beta-D-ribosyl)glycinamide + formate + ATP = N(2)-formyl-N(1)-(5-phospho-beta-D-ribosyl)glycinamide + ADP + phosphate + H(+). The protein operates within purine metabolism; IMP biosynthesis via de novo pathway; N(2)-formyl-N(1)-(5-phospho-D-ribosyl)glycinamide from N(1)-(5-phospho-D-ribosyl)glycinamide (formate route): step 1/1. Functionally, involved in the de novo purine biosynthesis. Catalyzes the transfer of formate to 5-phospho-ribosyl-glycinamide (GAR), producing 5-phospho-ribosyl-N-formylglycinamide (FGAR). Formate is provided by PurU via hydrolysis of 10-formyl-tetrahydrofolate. The protein is Formate-dependent phosphoribosylglycinamide formyltransferase of Francisella tularensis subsp. tularensis (strain SCHU S4 / Schu 4).